Reading from the N-terminus, the 121-residue chain is Fluoride-specific ion channel FluC 1 (121 aa).

A run of 4 helical transmembrane segments spans residues 3–23 (YLYI…LSML), 29–49 (IPLG…SIGA), 67–87 (TGLL…VTLF), and 92–112 (FILF…SCYL). Na(+) contacts are provided by G71 and T74.

It belongs to the fluoride channel Fluc/FEX (TC 1.A.43) family.

It localises to the cell membrane. The catalysed reaction is fluoride(in) = fluoride(out). Its activity is regulated as follows. Na(+) is not transported, but it plays an essential structural role and its presence is essential for fluoride channel function. Its function is as follows. Fluoride-specific ion channel. Important for reducing fluoride concentration in the cell, thus reducing its toxicity. In Staphylococcus epidermidis (strain ATCC 35984 / DSM 28319 / BCRC 17069 / CCUG 31568 / BM 3577 / RP62A), this protein is Fluoride-specific ion channel FluC 1.